The following is a 663-amino-acid chain: COBRA-like protein 9 (663 aa).

Residues 1–23 (MGVLLPIFFGVLLLFTVTPPSMS) form the signal peptide. 13 N-linked (GlcNAc...) asparagine glycosylation sites follow: asparagine 63, asparagine 111, asparagine 121, asparagine 169, asparagine 203, asparagine 326, asparagine 355, asparagine 397, asparagine 409, asparagine 429, asparagine 470, asparagine 550, and asparagine 561. Serine 638 is lipidated: GPI-anchor amidated serine. Positions 639–663 (GGRRNGAITVLSFITFYVAAFMVLL) are cleaved as a propeptide — removed in mature form.

This sequence belongs to the COBRA family. As to expression, expressed only in flowers.

It is found in the cell membrane. This is COBRA-like protein 9 (COBL9) from Arabidopsis thaliana (Mouse-ear cress).